A 136-amino-acid polypeptide reads, in one-letter code: Translation initiation factor 5A (136 aa).

K36 bears the Hypusine mark.

The protein belongs to the eIF-5A family.

The protein localises to the cytoplasm. Functionally, functions by promoting the formation of the first peptide bond. The chain is Translation initiation factor 5A (eIF5A) from Hyperthermus butylicus (strain DSM 5456 / JCM 9403 / PLM1-5).